The sequence spans 939 residues: Valine--tRNA ligase (939 aa).

Positions 47–57 match the 'HIGH' region motif; that stretch reads PNVTGILHMGH. The short motif at 563–567 is the 'KMSKS' region element; sequence KLSKS. Lysine 566 contributes to the ATP binding site. Residues 874 to 939 are a coiled coil; sequence EHLAKERVRL…QSILDKLASL (66 aa).

This sequence belongs to the class-I aminoacyl-tRNA synthetase family. ValS type 1 subfamily. In terms of assembly, monomer.

The protein localises to the cytoplasm. The enzyme catalyses tRNA(Val) + L-valine + ATP = L-valyl-tRNA(Val) + AMP + diphosphate. Functionally, catalyzes the attachment of valine to tRNA(Val). As ValRS can inadvertently accommodate and process structurally similar amino acids such as threonine, to avoid such errors, it has a 'posttransfer' editing activity that hydrolyzes mischarged Thr-tRNA(Val) in a tRNA-dependent manner. This chain is Valine--tRNA ligase, found in Chlamydia trachomatis serovar L2 (strain ATCC VR-902B / DSM 19102 / 434/Bu).